The chain runs to 301 residues: Probable alpha-L-glutamate ligase (301 aa).

One can recognise an ATP-grasp domain in the interval T104–E287. ATP contacts are provided by residues K141, E178 to Y179, D187, and R211 to N213. Mg(2+) is bound by residues D248, E260, and N262. Residues D248, E260, and N262 each contribute to the Mn(2+) site.

The protein belongs to the RimK family. Mg(2+) is required as a cofactor. Requires Mn(2+) as cofactor.

This chain is Probable alpha-L-glutamate ligase, found in Alkalilimnicola ehrlichii (strain ATCC BAA-1101 / DSM 17681 / MLHE-1).